A 439-amino-acid polypeptide reads, in one-letter code: Xylose isomerase (439 aa).

Residues His-101 and Asp-104 contribute to the active site. Mg(2+) contacts are provided by Glu-232, Glu-268, His-271, Asp-296, Asp-307, Asp-309, and Asp-339.

It belongs to the xylose isomerase family. Homotetramer. The cofactor is Mg(2+).

It is found in the cytoplasm. The catalysed reaction is alpha-D-xylose = alpha-D-xylulofuranose. The sequence is that of Xylose isomerase from Yersinia pestis bv. Antiqua (strain Angola).